Consider the following 116-residue polypeptide: Putative iron-sulfur cluster insertion protein ErpA (116 aa).

Cys-44, Cys-108, and Cys-110 together coordinate iron-sulfur cluster.

It belongs to the HesB/IscA family. In terms of assembly, homodimer. The cofactor is iron-sulfur cluster.

Functionally, required for insertion of 4Fe-4S clusters. This is Putative iron-sulfur cluster insertion protein ErpA from Dechloromonas aromatica (strain RCB).